Consider the following 557-residue polypeptide: Warthog protein 4 (557 aa).

Positions 1–20 (MRFSLLALVLLSSSYKFTYG) are cleaved as a signal peptide. The segment at 272–308 (QETNPQPPPPPGQQGGFVQPQGFQPQGGFQPQGFQPQ) is disordered. Residues 287–308 (GFVQPQGFQPQGGFQPQGFQPQ) are compositionally biased toward low complexity.

The protein belongs to the hedgehog family. The C-terminal domain displays an autoproteolysis activity.

It localises to the secreted. The protein resides in the cell surface. Its subcellular location is the cell membrane. It is found in the extracellular space. In terms of biological role, intercellular signal essential for a variety of patterning events during development. The chain is Warthog protein 4 (wrt-4) from Caenorhabditis elegans.